A 419-amino-acid polypeptide reads, in one-letter code: MSSREYDDLSHAFAGAGGGLLSMTLTYPLVTLTTHAQTMVRLKKNEEEEKENSNEDGSLSPKSSNTSNISQKKISQFEILKKILKDQGAKGLYNGLESALFGIAVTNFVYYYFYELTGKTLSRRSNPQTTSGSKKVTLKKGLSVWQSMAAGAVAGTISRVATNPIWVANTRMTILSKNQGKLGKLNTIEAIIYILKNEGWQKLFTGIVPALFLVLNPIIQYTIFEQLKSFIVKIKKRNVTPVDALLLGAFGKLIATIITYPYITLRSRMHVKSMTENNEDSEKERTDSVQSLPEDGSDEDNSKENPYAETINKIISKLPSPIVSMFIIGYKMYKEEGVSSFYRGLSVKLLQSILNAAFLFYFKEELLILSDAIIKSTKRVTGLANNPYNAKDVIHSFEKALCMRNPRSRTTTVPQTNEE.

3 Solcar repeats span residues 6–120 (YDDL…TGKT), 142–230 (LSVW…LKSF), and 239–369 (VTPV…LLIL). A helical transmembrane segment spans residues 12 to 32 (AFAGAGGGLLSMTLTYPLVTL). Basic and acidic residues predominate over residues 44-53 (KNEEEEKENS). The segment at 44–69 (KNEEEEKENSNEDGSLSPKSSNTSNI) is disordered. Polar residues predominate over residues 56–69 (DGSLSPKSSNTSNI). Helical transmembrane passes span 98-118 (SALFGIAVTNFVYYYFYELTG), 204-224 (FTGIVPALFLVLNPIIQYTIF), and 245-265 (LLLGAFGKLIATIITYPYITL). The interval 274-305 (MTENNEDSEKERTDSVQSLPEDGSDEDNSKEN) is disordered. The next 2 helical transmembrane spans lie at 310–330 (TINKIISKLPSPIVSMFIIGY) and 349–369 (LLQSILNAAFLFYFKEELLIL).

Belongs to the mitochondrial carrier (TC 2.A.29) family.

It localises to the peroxisome membrane. Its function is as follows. May have transport activity. This is Peroxisomal membrane protein PMP47B (PMP47B) from Candida boidinii (Yeast).